We begin with the raw amino-acid sequence, 188 residues long: GMP synthase [glutamine-hydrolyzing] subunit A (188 aa).

The Glutamine amidotransferase type-1 domain maps to 1 to 188 (MIVILNNGGQ…FCKVCGLLGE (188 aa)). The Nucleophile role is filled by cysteine 76. Active-site residues include histidine 163 and glutamate 165.

As to quaternary structure, heterodimer composed of a glutamine amidotransferase subunit (A) and a GMP-binding subunit (B).

The enzyme catalyses XMP + L-glutamine + ATP + H2O = GMP + L-glutamate + AMP + diphosphate + 2 H(+). The protein operates within purine metabolism; GMP biosynthesis; GMP from XMP (L-Gln route): step 1/1. Its function is as follows. Catalyzes the synthesis of GMP from XMP. In Methanococcus aeolicus (strain ATCC BAA-1280 / DSM 17508 / OCM 812 / Nankai-3), this protein is GMP synthase [glutamine-hydrolyzing] subunit A.